The chain runs to 86 residues: UPF0386 protein RC1_1783 (86 aa).

It belongs to the UPF0386 family.

This is UPF0386 protein RC1_1783 from Rhodospirillum centenum (strain ATCC 51521 / SW).